A 363-amino-acid chain; its full sequence is Phospho-N-acetylmuramoyl-pentapeptide-transferase (363 aa).

The next 10 helical transmembrane spans lie at 33–53 (YAVLMGIALYAGFFFTYGVLP), 82–102 (GVIFVSVFVLLVYLLMRPSFV), 105–125 (LILLLTWGVMLTGYLDDCAQV), 133–153 (GALDFLFAVLTAALLGHFYFH), 166–186 (PVFVSPFLFFAGSVVILWMSI), 198–218 (LSGALVLMALLSMGTIFYFLL), 227–247 (LLVPFVVDGAQWALMSFALAG), 271–291 (ALGFFIGVLVLISGNPFLLLM), 295–315 (VILVNGGTGLLKVVLLRFFHV), and 340–360 (VLLRFMILQGLLTIGLLGVLF).

It belongs to the glycosyltransferase 4 family. MraY subfamily. Mg(2+) serves as cofactor.

The protein localises to the cell inner membrane. It catalyses the reaction UDP-N-acetyl-alpha-D-muramoyl-L-alanyl-gamma-D-glutamyl-meso-2,6-diaminopimeloyl-D-alanyl-D-alanine + di-trans,octa-cis-undecaprenyl phosphate = di-trans,octa-cis-undecaprenyl diphospho-N-acetyl-alpha-D-muramoyl-L-alanyl-D-glutamyl-meso-2,6-diaminopimeloyl-D-alanyl-D-alanine + UMP. It functions in the pathway cell wall biogenesis; peptidoglycan biosynthesis. Catalyzes the initial step of the lipid cycle reactions in the biosynthesis of the cell wall peptidoglycan: transfers peptidoglycan precursor phospho-MurNAc-pentapeptide from UDP-MurNAc-pentapeptide onto the lipid carrier undecaprenyl phosphate, yielding undecaprenyl-pyrophosphoryl-MurNAc-pentapeptide, known as lipid I. The protein is Phospho-N-acetylmuramoyl-pentapeptide-transferase of Treponema pallidum (strain Nichols).